A 494-amino-acid chain; its full sequence is Cysteine--tRNA ligase (494 aa).

Residue Cys-29 coordinates Zn(2+). Residues 31-41 (VTVYDYCHLGH) carry the 'HIGH' region motif. Zn(2+)-binding residues include Cys-216, His-241, and Glu-245. The short motif at 273–277 (KMSKS) is the 'KMSKS' region element. Lys-276 contributes to the ATP binding site.

The protein belongs to the class-I aminoacyl-tRNA synthetase family. In terms of assembly, monomer. Zn(2+) is required as a cofactor.

It is found in the cytoplasm. It catalyses the reaction tRNA(Cys) + L-cysteine + ATP = L-cysteinyl-tRNA(Cys) + AMP + diphosphate. The sequence is that of Cysteine--tRNA ligase from Cyanothece sp. (strain PCC 7425 / ATCC 29141).